The primary structure comprises 251 residues: Fibroblast growth factor 23 (251 aa).

The first 24 residues, 1 to 24 (MLGTCLRLLVGVLCTVCSLGTARA), serve as a signal peptide directing secretion. Cysteine 95 and cysteine 113 are disulfide-bonded. O-linked (GalNAc) threonine glycans are attached at residues threonine 171 and threonine 178. Positions 175-251 (RRHTRSAEDP…DRCRPFPRFV (77 aa)) are disordered. A compositionally biased stretch (basic and acidic residues) spans 179–189 (RSAEDPPERDP). The residue at position 180 (serine 180) is a Phosphoserine; by FAM20C.

Belongs to the heparin-binding growth factors family. Interacts with FGFR1. Interacts with FGFR2, FGFR3 and FGFR4. Affinity between fibroblast growth factors (FGFs) and their receptors is increased by KL and heparan sulfate glycosaminoglycans that function as coreceptors. Post-translationally, following secretion this protein is inactivated by cleavage into a N-terminal fragment and a C-terminal fragment. The processing is effected by proprotein convertases. O-glycosylated at Thr-171 and Thr-178 by GALNT3 and glycosylation of Thr-178 requires previous glycosylation at Thr171. Glycosylation is necessary for secretion; it blocks processing by proprotein convertases when the O-glycan is alpha 2,6-sialylated. Competition between proprotein convertase cleavage and block of cleavage by O-glycosylation determines the level of secreted active FGF23. In terms of processing, phosphorylation at Ser-180 mediated by FAM20C slows down glycosylation at Thr-178 notably. As to expression, mainly expressed in the brain and thymus at low levels. In brain; preferentially expressed in the ventrolateral thalamic nucleus.

It is found in the secreted. Regulator of phosphate homeostasis. Inhibits renal tubular phosphate transport by reducing SLC34A1 levels. Acts directly on the parathyroid to decrease PTH secretion. Regulator of vitamin-D metabolism. Negatively regulates osteoblasts differentiation and matrix mineralization. Up-regulates EGR1 expression in the presence of KL. The chain is Fibroblast growth factor 23 (Fgf23) from Mus musculus (Mouse).